A 754-amino-acid chain; its full sequence is uncharacterized protein (754 aa).

Active-site charge relay system residues include Ser-585 and His-707. A disordered region spans residues 733–754 (SHAPPPSRKARSAARRSTDPVR).

It belongs to the peptidase S9A family.

This is an uncharacterized protein from Sinorhizobium fredii (strain NBRC 101917 / NGR234).